We begin with the raw amino-acid sequence, 372 residues long: N-methyl-L-tryptophan oxidase (372 aa).

4–34 (DLIIIGSGSVGAAAGYYATRAGLNVLMTDAH) contacts FAD. Cys-308 carries the post-translational modification S-8alpha-FAD cysteine.

The protein belongs to the MSOX/MTOX family. MTOX subfamily. In terms of assembly, monomer. The cofactor is FAD.

The enzyme catalyses N(alpha)-methyl-L-tryptophan + O2 + H2O = L-tryptophan + formaldehyde + H2O2. Functionally, catalyzes the oxidative demethylation of N-methyl-L-tryptophan. This Escherichia coli (strain K12 / DH10B) protein is N-methyl-L-tryptophan oxidase.